Reading from the N-terminus, the 439-residue chain is Trigger factor (439 aa).

Residues Gly162–Pro247 form the PPIase FKBP-type domain.

This sequence belongs to the FKBP-type PPIase family. Tig subfamily.

The protein resides in the cytoplasm. It carries out the reaction [protein]-peptidylproline (omega=180) = [protein]-peptidylproline (omega=0). Functionally, involved in protein export. Acts as a chaperone by maintaining the newly synthesized protein in an open conformation. Functions as a peptidyl-prolyl cis-trans isomerase. This Dichelobacter nodosus (strain VCS1703A) protein is Trigger factor.